Here is a 182-residue protein sequence, read N- to C-terminus: Ribosome-recycling factor (182 aa).

The protein belongs to the RRF family.

It localises to the cytoplasm. Functionally, responsible for the release of ribosomes from messenger RNA at the termination of protein biosynthesis. May increase the efficiency of translation by recycling ribosomes from one round of translation to another. The chain is Ribosome-recycling factor from Gloeothece citriformis (strain PCC 7424) (Cyanothece sp. (strain PCC 7424)).